A 234-amino-acid chain; its full sequence is Large ribosomal subunit protein uL1 (234 aa).

It belongs to the universal ribosomal protein uL1 family. As to quaternary structure, part of the 50S ribosomal subunit.

Functionally, binds directly to 23S rRNA. The L1 stalk is quite mobile in the ribosome, and is involved in E site tRNA release. Protein L1 is also a translational repressor protein, it controls the translation of the L11 operon by binding to its mRNA. The chain is Large ribosomal subunit protein uL1 from Bdellovibrio bacteriovorus (strain ATCC 15356 / DSM 50701 / NCIMB 9529 / HD100).